The chain runs to 301 residues: Probable alpha-L-glutamate ligase (301 aa).

Residues 104 to 287 enclose the ATP-grasp domain; it reads LQLLSRRGIG…VAGIIIEHLE (184 aa). ATP is bound by residues K141, 178–179, D187, and 211–213; these read EY and RSN. Positions 248, 260, and 262 each coordinate Mg(2+). 3 residues coordinate Mn(2+): D248, E260, and N262.

The protein belongs to the RimK family. The cofactor is Mg(2+). It depends on Mn(2+) as a cofactor.

The chain is Probable alpha-L-glutamate ligase from Pseudomonas fluorescens (strain Pf0-1).